A 632-amino-acid chain; its full sequence is U-box domain-containing protein 14 (632 aa).

Positions 247 to 321 constitute a U-box domain; sequence VIPEYFRCPI…ALWCESNGIE (75 aa). ARM repeat units follow at residues 377–416, 418–457, 459–498, 500–539, and 541–580; these read VDNRVCIAEAGAIPLLVELLSSPDPRTQEHSVTALLNLSI, EGNKGAIVDAGAITDIVEVLKNGSMEARENAAATLFSLSV, DENKVAIGAAGAIQALISLLEEGTRRGKKDAATAIFNLCI, QGNKSRAVKGGIVDPLTRLLKDAGGGMVDEALAILAILST, and QEGKTAIAEAESIPVLVEIIRTGSPRNRENAAAILWYLCI.

In terms of assembly, homodimer. Interacts with SNL1. Binds to SD11, SD16, SD17, SD18, SD113, SD129 and SD25. In terms of tissue distribution, expressed in flowers, green siliques, seeds and rosette leaves.

The enzyme catalyses S-ubiquitinyl-[E2 ubiquitin-conjugating enzyme]-L-cysteine + [acceptor protein]-L-lysine = [E2 ubiquitin-conjugating enzyme]-L-cysteine + N(6)-ubiquitinyl-[acceptor protein]-L-lysine.. It participates in protein modification; protein ubiquitination. Functions as an E3 ubiquitin ligase with specific E2 ubiquitin-conjugating enzymes. Undergoes auto-ubiquitination. The sequence is that of U-box domain-containing protein 14 (PUB14) from Arabidopsis thaliana (Mouse-ear cress).